Consider the following 156-residue polypeptide: 6,7-dimethyl-8-ribityllumazine synthase (156 aa).

Residues Phe22, 56 to 58 (AFE), and 80 to 82 (VVI) each bind 5-amino-6-(D-ribitylamino)uracil. 85 to 86 (ST) contacts (2S)-2-hydroxy-3-oxobutyl phosphate. His88 (proton donor) is an active-site residue. 5-amino-6-(D-ribitylamino)uracil is bound at residue Phe113. Residue Arg127 coordinates (2S)-2-hydroxy-3-oxobutyl phosphate.

It belongs to the DMRL synthase family.

The enzyme catalyses (2S)-2-hydroxy-3-oxobutyl phosphate + 5-amino-6-(D-ribitylamino)uracil = 6,7-dimethyl-8-(1-D-ribityl)lumazine + phosphate + 2 H2O + H(+). Its pathway is cofactor biosynthesis; riboflavin biosynthesis; riboflavin from 2-hydroxy-3-oxobutyl phosphate and 5-amino-6-(D-ribitylamino)uracil: step 1/2. Functionally, catalyzes the formation of 6,7-dimethyl-8-ribityllumazine by condensation of 5-amino-6-(D-ribitylamino)uracil with 3,4-dihydroxy-2-butanone 4-phosphate. This is the penultimate step in the biosynthesis of riboflavin. The protein is 6,7-dimethyl-8-ribityllumazine synthase of Streptococcus agalactiae serotype Ia (strain ATCC 27591 / A909 / CDC SS700).